A 376-amino-acid polypeptide reads, in one-letter code: tRNA-specific 2-thiouridylase MnmA (376 aa).

Residues 17–24 and Met43 each bind ATP; that span reads GMSGGVDS. The segment at 103–105 is interaction with target base in tRNA; that stretch reads NPD. The active-site Nucleophile is the Cys108. A disulfide bridge connects residues Cys108 and Cys204. Gly132 provides a ligand contact to ATP. Residues 154-156 form an interaction with tRNA region; that stretch reads KDQ. The active-site Cysteine persulfide intermediate is Cys204. Residues 316 to 317 are interaction with tRNA; that stretch reads RY.

This sequence belongs to the MnmA/TRMU family.

Its subcellular location is the cytoplasm. It carries out the reaction S-sulfanyl-L-cysteinyl-[protein] + uridine(34) in tRNA + AH2 + ATP = 2-thiouridine(34) in tRNA + L-cysteinyl-[protein] + A + AMP + diphosphate + H(+). Catalyzes the 2-thiolation of uridine at the wobble position (U34) of tRNA, leading to the formation of s(2)U34. The protein is tRNA-specific 2-thiouridylase MnmA of Pseudomonas savastanoi pv. phaseolicola (strain 1448A / Race 6) (Pseudomonas syringae pv. phaseolicola (strain 1448A / Race 6)).